Reading from the N-terminus, the 278-residue chain is Shikimate dehydrogenase (NADP(+)) (278 aa).

Shikimate is bound by residues 18–20 (SRS) and threonine 65. Lysine 69 functions as the Proton acceptor in the catalytic mechanism. Position 80 (glutamate 80) interacts with NADP(+). Positions 89 and 104 each coordinate shikimate. Residues 129–133 (GAGGS) and leucine 218 contribute to the NADP(+) site. Residue tyrosine 220 coordinates shikimate. Glycine 241 is a binding site for NADP(+).

The protein belongs to the shikimate dehydrogenase family. Homodimer.

The enzyme catalyses shikimate + NADP(+) = 3-dehydroshikimate + NADPH + H(+). It functions in the pathway metabolic intermediate biosynthesis; chorismate biosynthesis; chorismate from D-erythrose 4-phosphate and phosphoenolpyruvate: step 4/7. In terms of biological role, involved in the biosynthesis of the chorismate, which leads to the biosynthesis of aromatic amino acids. Catalyzes the reversible NADPH linked reduction of 3-dehydroshikimate (DHSA) to yield shikimate (SA). The polypeptide is Shikimate dehydrogenase (NADP(+)) (Rhodopseudomonas palustris (strain ATCC BAA-98 / CGA009)).